The chain runs to 2328 residues: Reducing polyketide synthase Preu2 (2328 aa).

The region spanning 1 to 259 is the Ketosynthase family 3 (KS3) domain; that stretch reads MMAVHLAVAS…GSNVHVIVES (259 aa). The malonyl-CoA:ACP transacylase (MAT) domain stretch occupies residues 376 to 696; that stretch reads IFTGQGAQWP…SGLLKRSSNS (321 aa). The interval 766–899 is N-terminal hotdog fold; it reads NELLGEELSM…GSLTVQFGDD (134 aa). Residues 766–1057 are dehydratase (DH) domain; the sequence is NELLGEELSM…FCTAPFRMST (292 aa). The region spanning 766–1059 is the PKS/mFAS DH domain; it reads NELLGEELSM…TAPFRMSTPE (294 aa). The active-site Proton acceptor; for dehydratase activity is the H798. The C-terminal hotdog fold stretch occupies residues 914–1059; that stretch reads LTELDLDTFY…TAPFRMSTPE (146 aa). The active-site Proton donor; for dehydratase activity is the D969. The tract at residues 1198–1419 is methyltransferase (MT) domain; the sequence is DGMLTQLYSE…VDERVVSLRD (222 aa). The interval 1932–2111 is ketoreductase (KR)domain; that stretch reads CYIIIGTSDL…AASVVHLGHV (180 aa). The 79-residue stretch at 2231–2309 folds into the Carrier domain; sequence SSSHDIIRNG…NIVDFAVAHL (79 aa). S2269 bears the O-(pantetheine 4'-phosphoryl)serine mark.

Pantetheine 4'-phosphate is required as a cofactor.

In terms of biological role, reducing polyketide synthase; part of a gene cluster that mediates the biosynthesis of a yet unidentified natural product. This chain is Reducing polyketide synthase Preu2, found in Preussia isomera (Coprophilous fungus).